The sequence spans 250 residues: MLPLQVSSLGVEGEGIWLALGTVGMLLGMVYFMAKGWDVQDPEQEEFYVITILIAGIAASSYLSMFFGFGLTEVELVNGRVIDVYWARYADWLFTTPLLLLDIGLLAGASNRDMASLITIDAFMIVTGLAATLMKVPVARYAFWTISTIAMLFVLYYLVVVVGEAASDASEEAQSTFNVLRNIILVAWAIYPVAWLVGTEGLGLVGLFGETLLFMILDLTAKIGFGFILLRSRAIVGGDSAPTPSAEAAD.

7 consecutive transmembrane segments (helical) span residues 14-34 (EGIW…YFMA), 49-69 (VITI…FFGF), 89-109 (YADW…LAGA), 114-134 (MASL…ATLM), 142-162 (AFWT…VVVV), 183-203 (IILV…EGLG), and 210-230 (ETLL…FILL). N6-(retinylidene)lysine is present on Lys222.

This sequence belongs to the archaeal/bacterial/fungal opsin family. The covalent binding of retinal to the apoprotein, bacterioopsin, generates bacteriorhodopsin.

The protein localises to the membrane. Functionally, light-driven proton pump. The chain is Bacteriorhodopsin-II (xop1) from Haloarcula marismortui (strain ATCC 43049 / DSM 3752 / JCM 8966 / VKM B-1809) (Halobacterium marismortui).